We begin with the raw amino-acid sequence, 152 residues long: Large ribosomal subunit protein uL15 (152 aa).

Positions 1 to 57 (MTSTLNTLKSNSGSRKKKLRKGRGIAAGQGASCGFGMRGQKSRSGRPTRPGFEGGQM) are disordered. The span at 14–23 (SRKKKLRKGR) shows a compositional bias: basic residues. Residues 25–37 (IAAGQGASCGFGM) show a composition bias toward gly residues.

The protein belongs to the universal ribosomal protein uL15 family. Part of the 50S ribosomal subunit.

Functionally, binds to the 23S rRNA. This Prochlorococcus marinus (strain MIT 9301) protein is Large ribosomal subunit protein uL15.